A 364-amino-acid chain; its full sequence is DNA polymerase IV (364 aa).

Residues isoleucine 8–glycine 189 form the UmuC domain. Mg(2+)-binding residues include aspartate 12 and aspartate 107. The active site involves glutamate 108.

This sequence belongs to the DNA polymerase type-Y family. As to quaternary structure, monomer. It depends on Mg(2+) as a cofactor.

It localises to the cytoplasm. It carries out the reaction DNA(n) + a 2'-deoxyribonucleoside 5'-triphosphate = DNA(n+1) + diphosphate. Poorly processive, error-prone DNA polymerase involved in untargeted mutagenesis. Copies undamaged DNA at stalled replication forks, which arise in vivo from mismatched or misaligned primer ends. These misaligned primers can be extended by PolIV. Exhibits no 3'-5' exonuclease (proofreading) activity. May be involved in translesional synthesis, in conjunction with the beta clamp from PolIII. This chain is DNA polymerase IV, found in Shewanella woodyi (strain ATCC 51908 / MS32).